Consider the following 833-residue polypeptide: Leucine--tRNA ligase (833 aa).

A 'HIGH' region motif is present at residues 41 to 52; that stretch reads PYPSGAGLHVGH. Positions 610-614 match the 'KMSKS' region motif; sequence KMSKS. Lys613 lines the ATP pocket.

The protein belongs to the class-I aminoacyl-tRNA synthetase family.

Its subcellular location is the cytoplasm. The enzyme catalyses tRNA(Leu) + L-leucine + ATP = L-leucyl-tRNA(Leu) + AMP + diphosphate. The polypeptide is Leucine--tRNA ligase (Streptococcus pyogenes serotype M1).